The following is a 1110-amino-acid chain: Serine/threonine-protein kinase PknK (1110 aa).

The region spanning 26-283 (FDNVEEIGRG…TAADVGEELR (258 aa)) is the Protein kinase domain. ATP-binding positions include 32-40 (IGRGGFGVV) and lysine 55. Arginine 148 serves as the catalytic Proton acceptor. Mg(2+) contacts are provided by asparagine 154 and aspartate 167. Residues 308 to 343 (RSPEAHAAHRHTGGGTPTVPTPPTPATKYRPSVPTG) form a disordered region.

Belongs to the protein kinase superfamily. Ser/Thr protein kinase family.

It carries out the reaction L-seryl-[protein] + ATP = O-phospho-L-seryl-[protein] + ADP + H(+). The enzyme catalyses L-threonyl-[protein] + ATP = O-phospho-L-threonyl-[protein] + ADP + H(+). This chain is Serine/threonine-protein kinase PknK (pknK), found in Mycobacterium bovis (strain ATCC BAA-935 / AF2122/97).